Reading from the N-terminus, the 327-residue chain is dTDP-4-dehydrorhamnose reductase (327 aa).

A disordered region spans residues 1 to 22; the sequence is MDLINGMGTSPGYWRTPREPGN. NADH-binding positions include 43–45, 69–70, and 91–93; these read GMV, DI, and AYT. NADPH is bound by residues 44–45, 69–70, and 91–93; these read MV, DI, and AYT. DTDP-beta-L-rhamnose is bound at residue 132 to 133; that stretch reads TD. 2 residues coordinate NADH: Tyr157 and Lys161. NADPH is bound by residues Tyr157 and Lys161. The active-site Proton donor/acceptor is Tyr157. Trp182 is a binding site for dTDP-beta-L-rhamnose. Positions 264–276 are enriched in basic and acidic residues; the sequence is PERVRPCGSDRHP. The interval 264 to 292 is disordered; the sequence is PERVRPCGSDRHPRPAPRPSYTVLSSQRS.

It belongs to the dTDP-4-dehydrorhamnose reductase family. It depends on Mg(2+) as a cofactor.

It carries out the reaction dTDP-beta-L-rhamnose + NADP(+) = dTDP-4-dehydro-beta-L-rhamnose + NADPH + H(+). It participates in carbohydrate biosynthesis; dTDP-L-rhamnose biosynthesis. Its function is as follows. Involved in the biosynthesis of the dTDP-L-rhamnose which is a component of the critical linker, D-N-acetylglucosamine-L-rhamnose disaccharide, which connects the galactan region of arabinogalactan to peptidoglycan via a phosphodiester linkage. Catalyzes the reduction of dTDP-6-deoxy-L-lyxo-4-hexulose to yield dTDP-L-rhamnose. The sequence is that of dTDP-4-dehydrorhamnose reductase from Mycolicibacterium smegmatis (strain ATCC 700084 / mc(2)155) (Mycobacterium smegmatis).